We begin with the raw amino-acid sequence, 212 residues long: KxDL motif-containing protein CG10681 (212 aa).

The disordered stretch occupies residues 128-159 (RSSLAEEAEDDTEAQAKKTAETPAPAAAKPVL). Over residues 148–157 (ETPAPAAAKP) the composition is skewed to low complexity.

This sequence belongs to the KXD1 family.

This chain is KxDL motif-containing protein CG10681, found in Drosophila melanogaster (Fruit fly).